The following is a 257-amino-acid chain: Tryptophan synthase alpha chain (257 aa).

Catalysis depends on proton acceptor residues E47 and D58.

This sequence belongs to the TrpA family. In terms of assembly, tetramer of two alpha and two beta chains.

It carries out the reaction (1S,2R)-1-C-(indol-3-yl)glycerol 3-phosphate + L-serine = D-glyceraldehyde 3-phosphate + L-tryptophan + H2O. The protein operates within amino-acid biosynthesis; L-tryptophan biosynthesis; L-tryptophan from chorismate: step 5/5. The alpha subunit is responsible for the aldol cleavage of indoleglycerol phosphate to indole and glyceraldehyde 3-phosphate. This chain is Tryptophan synthase alpha chain, found in Listeria innocua serovar 6a (strain ATCC BAA-680 / CLIP 11262).